A 465-amino-acid polypeptide reads, in one-letter code: Argininosuccinate lyase (465 aa).

Belongs to the lyase 1 family. Argininosuccinate lyase subfamily.

It localises to the cytoplasm. The catalysed reaction is 2-(N(omega)-L-arginino)succinate = fumarate + L-arginine. The protein operates within amino-acid biosynthesis; L-arginine biosynthesis; L-arginine from L-ornithine and carbamoyl phosphate: step 3/3. The sequence is that of Argininosuccinate lyase from Methylococcus capsulatus (strain ATCC 33009 / NCIMB 11132 / Bath).